The primary structure comprises 483 residues: Probable apyrase 3 (483 aa).

Residues 1 to 29 (MTPETDALKVQILPKHQSLPYTVTKAKSK) are Cytoplasmic-facing. The chain crosses the membrane as a helical; Signal-anchor for type II membrane protein span at residues 30-50 (SLILLVVVSVTITLGLLLYVF). Residues 51–483 (NSNSVISSGS…NGKSRKYLGF (433 aa)) lie on the Extracellular side of the membrane. Position 72–82 (72–82 (VLIDAGSSGTR)) interacts with ATP. Glu195 acts as the Proton acceptor in catalysis. 219–229 (GIVELGGASAQ) is an ATP binding site. Asn250, Asn281, Asn305, and Asn326 each carry an N-linked (GlcNAc...) asparagine glycan.

This sequence belongs to the GDA1/CD39 NTPase family. The cofactor is Ca(2+). As to expression, expressed in the initiation zone of lateral root and in the lateral root tip, the adaxial junction of lateral shoots with the stems, and in the abscission zone of flower organs. Not expressed in the rosette leaves.

The protein localises to the membrane. The enzyme catalyses a ribonucleoside 5'-triphosphate + 2 H2O = a ribonucleoside 5'-phosphate + 2 phosphate + 2 H(+). In terms of biological role, catalyzes the hydrolysis of phosphoanhydride bonds of nucleoside tri- and di-phosphates. This chain is Probable apyrase 3 (APY3), found in Arabidopsis thaliana (Mouse-ear cress).